The following is a 264-amino-acid chain: H-2 class II histocompatibility antigen, I-E beta chain (264 aa).

The signal sequence occupies residues 1 to 31; the sequence is MVWLPRVPCVAAVILLLTVLSPPVALVRNSR. A beta-1 region spans residues 32-121; sequence PRFLEYSTSE…IFDNFLVPRR (90 aa). Residues 32–225 lie on the Extracellular side of the membrane; it reads PRFLEYSTSE…KAQSTSAQNK (194 aa). 2 cysteine pairs are disulfide-bonded: Cys42/Cys106 and Cys144/Cys200. Asn46 carries an N-linked (GlcNAc...) asparagine glycan. The beta-2 stretch occupies residues 122–215; that stretch reads VEPTVTVYPT…SLTDPVTVEW (94 aa). The region spanning 124 to 214 is the Ig-like C1-type domain; the sequence is PTVTVYPTKT…PSLTDPVTVE (91 aa). The interval 216–225 is connecting peptide; sequence KAQSTSAQNK. Residues 226-248 traverse the membrane as a helical segment; that stretch reads MLSGVGGFVLGLLFLGAGLFIYF. Residues 249–264 lie on the Cytoplasmic side of the membrane; it reads RNQKGQSGLQPTGLLS.

Belongs to the MHC class II family. Post-translationally, ubiquitinated in immature dendritic cells leading to down-regulation of MHC class II.

The protein localises to the membrane. This chain is H-2 class II histocompatibility antigen, I-E beta chain (H2-Eb1), found in Mus musculus (Mouse).